The following is a 388-amino-acid chain: Pepsin A-3 (388 aa).

The first 15 residues, 1–15, serve as a signal peptide directing secretion; that stretch reads MKWLLLLGLVALSEC. Residues 16–62 constitute a propeptide, activation peptide; sequence IMYKVPLIRKKSLRRTLSERGLLKDFLKKHNLNPARKYFPQWKAPTL. A Peptidase A1 domain is found at 76 to 385; sequence YFGTIGIGTP…DRANNQVGLA (310 aa). Asp94 is a catalytic residue. Cystine bridges form between Cys107–Cys112 and Cys268–Cys272. Asp277 is an active-site residue. Cys311 and Cys344 are oxidised to a cystine.

It belongs to the peptidase A1 family.

It is found in the secreted. The enzyme catalyses Preferential cleavage: hydrophobic, preferably aromatic, residues in P1 and P1' positions. Cleaves 1-Phe-|-Val-2, 4-Gln-|-His-5, 13-Glu-|-Ala-14, 14-Ala-|-Leu-15, 15-Leu-|-Tyr-16, 16-Tyr-|-Leu-17, 23-Gly-|-Phe-24, 24-Phe-|-Phe-25 and 25-Phe-|-Tyr-26 bonds in the B chain of insulin.. In terms of biological role, shows particularly broad specificity; although bonds involving phenylalanine and leucine are preferred, many others are also cleaved to some extent. The polypeptide is Pepsin A-3 (PGA3) (Homo sapiens (Human)).